A 66-amino-acid polypeptide reads, in one-letter code: uncharacterized protein (66 aa).

This is an uncharacterized protein from Frog virus 3 (isolate Goorha) (FV-3).